Consider the following 476-residue polypeptide: Aspartyl/glutamyl-tRNA(Asn/Gln) amidotransferase subunit B (476 aa).

Belongs to the GatB/GatE family. GatB subfamily. In terms of assembly, heterotrimer of A, B and C subunits.

The enzyme catalyses L-glutamyl-tRNA(Gln) + L-glutamine + ATP + H2O = L-glutaminyl-tRNA(Gln) + L-glutamate + ADP + phosphate + H(+). It catalyses the reaction L-aspartyl-tRNA(Asn) + L-glutamine + ATP + H2O = L-asparaginyl-tRNA(Asn) + L-glutamate + ADP + phosphate + 2 H(+). In terms of biological role, allows the formation of correctly charged Asn-tRNA(Asn) or Gln-tRNA(Gln) through the transamidation of misacylated Asp-tRNA(Asn) or Glu-tRNA(Gln) in organisms which lack either or both of asparaginyl-tRNA or glutaminyl-tRNA synthetases. The reaction takes place in the presence of glutamine and ATP through an activated phospho-Asp-tRNA(Asn) or phospho-Glu-tRNA(Gln). This is Aspartyl/glutamyl-tRNA(Asn/Gln) amidotransferase subunit B from Latilactobacillus sakei subsp. sakei (strain 23K) (Lactobacillus sakei subsp. sakei).